The chain runs to 288 residues: 33 kDa chaperonin (288 aa).

2 cysteine pairs are disulfide-bonded: cysteine 225–cysteine 227 and cysteine 258–cysteine 261.

It belongs to the HSP33 family. In terms of processing, under oxidizing conditions two disulfide bonds are formed involving the reactive cysteines. Under reducing conditions zinc is bound to the reactive cysteines and the protein is inactive.

Its subcellular location is the cytoplasm. Functionally, redox regulated molecular chaperone. Protects both thermally unfolding and oxidatively damaged proteins from irreversible aggregation. Plays an important role in the bacterial defense system toward oxidative stress. The sequence is that of 33 kDa chaperonin from Shewanella denitrificans (strain OS217 / ATCC BAA-1090 / DSM 15013).